The sequence spans 720 residues: Transcriptional regulator EFH1 (720 aa).

Composition is skewed to polar residues over residues 1-15 (MNGI…NFYN) and 22-35 (PSSS…SSQD). Disordered regions lie at residues 1-111 (MNGI…SSST), 181-223 (SFQM…HQSQ), 245-336 (QKEF…TIAT), and 365-437 (YQRQ…PQPD). Over residues 71-105 (QQNQSESQQSRQSHHLQQQQQQQQQQQQNQHNQQN) the composition is skewed to low complexity. A compositionally biased stretch (polar residues) spans 181–200 (SFQMGSVSTPDTQNSSIRSK). Residues 201-223 (QQQQHSYQQQQPQQLSQSQHQSQ) are compositionally biased toward low complexity. Over residues 254–266 (GDQTLVPQTNSKL) the composition is skewed to polar residues. Residues 267-304 (QQQISETSYSQQQQQQQSPPTPQKQQQQQHYQHQTTQP) show a composition bias toward low complexity. A compositionally biased stretch (polar residues) spans 313–336 (YSQTGGPSSSPVAGNISIPTTIAT). Residues 366–399 (QRQQQQQQQHQQPQSQQMSQISQLSQQIPPQGSS) show a composition bias toward low complexity. Over residues 400 to 413 (KNISINSTPTKSRA) the composition is skewed to polar residues. The segment covering 414 to 433 (SSITTRSGRQSRSTSISSFI) has biased composition (low complexity). Residues 446-552 (KVATTRWDDE…KNIKQYFLTK (107 aa)) enclose the HTH APSES-type domain. Residues 480–501 (GTKLLNVIGMTRGKRDGILKTE) constitute a DNA-binding region (H-T-H motif). A compositionally biased stretch (basic and acidic residues) spans 569–582 (GMTRQREEVRREGR). Positions 569–662 (GMTRQREEVR…KNSESKLLET (94 aa)) are disordered. Over residues 613–644 (VPGDDEEEEDDDDDDDDDEEEGEQDDEEEEDG) the composition is skewed to acidic residues. Residues 645–654 (SSTSMSSSKN) are compositionally biased toward low complexity.

This sequence belongs to the EFG1/PHD1/stuA family.

It is found in the nucleus. Its function is as follows. Transcription factor that regulates filamentous growth through repression of EFG1. Regulates the level of colonizing fungi, favoring commensalism as opposed to candidiasis. The sequence is that of Transcriptional regulator EFH1 (EFH1) from Candida albicans (strain SC5314 / ATCC MYA-2876) (Yeast).